Reading from the N-terminus, the 201-residue chain is Adenylyl-sulfate kinase (201 aa).

An ATP-binding site is contributed by 35-42; sequence GLSGSGKS. Serine 109 (phosphoserine intermediate) is an active-site residue.

The protein belongs to the APS kinase family.

The catalysed reaction is adenosine 5'-phosphosulfate + ATP = 3'-phosphoadenylyl sulfate + ADP + H(+). It functions in the pathway sulfur metabolism; hydrogen sulfide biosynthesis; sulfite from sulfate: step 2/3. In terms of biological role, catalyzes the synthesis of activated sulfate. The sequence is that of Adenylyl-sulfate kinase from Salmonella gallinarum (strain 287/91 / NCTC 13346).